The following is a 432-amino-acid chain: Asparagine--tRNA ligase (432 aa).

Belongs to the class-II aminoacyl-tRNA synthetase family. As to quaternary structure, homodimer.

The protein resides in the cytoplasm. It carries out the reaction tRNA(Asn) + L-asparagine + ATP = L-asparaginyl-tRNA(Asn) + AMP + diphosphate + H(+). The polypeptide is Asparagine--tRNA ligase (Lactobacillus johnsonii (strain CNCM I-12250 / La1 / NCC 533)).